The chain runs to 37 residues: Large ribosomal subunit protein bL36 (37 aa).

Belongs to the bacterial ribosomal protein bL36 family.

The polypeptide is Large ribosomal subunit protein bL36 (Ureaplasma parvum serovar 3 (strain ATCC 27815 / 27 / NCTC 11736)).